The following is a 265-amino-acid chain: H-2 class II histocompatibility antigen, A-D beta chain (265 aa).

The N-terminal stretch at 1–27 (MALQIPSLLLSAAVVVLMVLSSPRTEG) is a signal peptide. A beta-1 region spans residues 28 to 122 (GNSERHFVVQ…PETSTSLRRL (95 aa)). Over 28–226 (GNSERHFVVQ…RAQSESARSK (199 aa)) the chain is Extracellular. 2 cysteine pairs are disulfide-bonded: C42/C106 and C145/C201. The N-linked (GlcNAc...) asparagine glycan is linked to N46. Positions 123-216 (EQPNVAISLS…SLKSPITVEW (94 aa)) are beta-2. The 89-residue stretch at 125–213 (PNVAISLSRT…EHPSLKSPIT (89 aa)) folds into the Ig-like C1-type domain. The connecting peptide stretch occupies residues 217–226 (RAQSESARSK). A helical membrane pass occupies residues 227–247 (MLSGIGGCVLGVIFLGLGLFI). Topologically, residues 248–265 (RHRSQKGPRGPPPAGLLQ) are cytoplasmic.

It belongs to the MHC class II family. Post-translationally, ubiquitinated in immature dendritic cells leading to down-regulation of MHC class II.

The protein localises to the membrane. This is H-2 class II histocompatibility antigen, A-D beta chain (H2-Ab1) from Mus musculus (Mouse).